Reading from the N-terminus, the 212-residue chain is Eukaryotic translation initiation factor 4E-4 (212 aa).

A disulfide bond links Cys-143 and Cys-147.

Belongs to the eukaryotic initiation factor 4E family. In terms of assembly, eIF4F is a multi-subunit complex, the composition of which varies with external and internal environmental conditions. It is composed of at least eIF4A, eIF4E and eIF4G. eIF4E is also known to interact with other partners. As to expression, enriched in somatic cells.

Its function is as follows. Recognizes and binds the 7-methylguanosine-containing mRNA cap during an early step in the initiation of protein synthesis and facilitates ribosome binding by inducing the unwinding of the mRNAs secondary structures. All 5 eIF4E proteins bind monomethyl cap structures. Only ife-1, ife-2 and ife-5 bind trimethyl cap structures which result from trans-splicing. Translation of trimethyl cap structure mRNAs may be regulated by intracellular redox state; disulfide bonds change the width and depth of the cap-binding cavity determining selectivity to mRNA caps. The polypeptide is Eukaryotic translation initiation factor 4E-4 (ife-4) (Caenorhabditis elegans).